Reading from the N-terminus, the 436-residue chain is Succinyl-CoA:glutarate CoA-transferase (436 aa).

The N-terminal 8 residues, 1–8 (MLWMLARA), are a transit peptide targeting the mitochondrion. Residue aspartate 203 is the Nucleophile of the active site. Residues lysine 392 and lysine 423 each carry the N6-acetyllysine modification.

This sequence belongs to the CoA-transferase III family.

It localises to the mitochondrion. The enzyme catalyses glutarate + succinyl-CoA = glutaryl-CoA + succinate. It catalyses the reaction 3-hydroxy-3-methylglutarate + succinyl-CoA = (3S)-3-hydroxy-3-methylglutaryl-CoA + succinate. It carries out the reaction 3-hydroxy-3-methylglutarate + glutaryl-CoA = (3S)-3-hydroxy-3-methylglutaryl-CoA + glutarate. The catalysed reaction is hexanedioate + glutaryl-CoA = hexanedioyl-CoA + glutarate. The enzyme catalyses itaconate + glutaryl-CoA = itaconyl-CoA + glutarate. It catalyses the reaction itaconate + succinyl-CoA = itaconyl-CoA + succinate. Coenzyme A (CoA) transferase that reversibly catalyzes the transfer of a CoA moiety from a dicarboxyl-CoA to a dicarboxylate in a metabolite recycling process. Displays preference for succinyl-CoA and glutarate-CoA as dicarboxyl-CoA donors and glutarate, succinate, adipate/hexanedioate, itaconate and 3-hydroxy-3-methylglutarate as dicarboxylate acceptors. Acts on intermediates or end products of lysine and tryptophan degradation pathway, in particular catalyzes succinyl-CoA-dependent reesterification of free glutarate into glutaryl-CoA to prevent renal excretion of glutarate. Upon inflammation, may convert macrophage-derived itaconate to itaconyl-CoA in erythroid precursors where it negatively regulates the TCA cycle and heme synthesis to limit erythroid differentiation in the context of stress erythropoiesis. The sequence is that of Succinyl-CoA:glutarate CoA-transferase from Mus musculus (Mouse).